The sequence spans 475 residues: Ribulose bisphosphate carboxylase large chain (475 aa).

Residues Asn123 and Thr173 each contribute to the substrate site. Lys175 (proton acceptor) is an active-site residue. Substrate is bound at residue Lys177. 3 residues coordinate Mg(2+): Lys201, Asp203, and Glu204. An N6-carboxylysine modification is found at Lys201. His294 serves as the catalytic Proton acceptor. The substrate site is built by Arg295, His327, and Ser379.

The protein belongs to the RuBisCO large chain family. Type I subfamily. Heterohexadecamer of 8 large chains and 8 small chains. Requires Mg(2+) as cofactor.

It localises to the plastid. The protein resides in the cyanelle. It catalyses the reaction 2 (2R)-3-phosphoglycerate + 2 H(+) = D-ribulose 1,5-bisphosphate + CO2 + H2O. The enzyme catalyses D-ribulose 1,5-bisphosphate + O2 = 2-phosphoglycolate + (2R)-3-phosphoglycerate + 2 H(+). Its function is as follows. RuBisCO catalyzes two reactions: the carboxylation of D-ribulose 1,5-bisphosphate, the primary event in carbon dioxide fixation, as well as the oxidative fragmentation of the pentose substrate in the photorespiration process. Both reactions occur simultaneously and in competition at the same active site. This is Ribulose bisphosphate carboxylase large chain from Cyanophora paradoxa.